We begin with the raw amino-acid sequence, 1137 residues long: Protein sel-1 homolog 3 (1137 aa).

Residues 1–42 form a disordered region; it reads MQWRGAGLWWPRRRQQQQQQQPPPPAFGPPAAAMVPPSRGVS. 2 N-linked (GlcNAc...) asparagine glycosylation sites follow: asparagine 206 and asparagine 387. Sel1-like repeat units follow at residues 575-609, 611-647, 694-730, 732-767, 768-800, 801-839, and 840-877; these read HKAS…GQGS, RLSS…TKTP, AAAQ…LETE, PALI…SKGL, HQAV…EMGN, PDAS…QGGH, and IEGT…EKNG. Serine 613 carries the phosphoserine modification. N-linked (GlcNAc...) asparagine glycosylation is present at asparagine 942. The stretch at 952–988 is one Sel1-like 8 repeat; the sequence is SFAYLKMGDLYYYGHQNQSQDLELSVQMYAQAALDGD. Residues 1067 to 1087 form a helical membrane-spanning segment; the sequence is LIYFLGTFLLSVVIAWMVLYL. Residues 1100–1137 are disordered; sequence AWVSADPTSSTPSPAVPPAADASDHDPPMMANGPEPRG. Residues 1102–1120 show a composition bias toward low complexity; that stretch reads VSADPTSSTPSPAVPPAAD.

The protein resides in the membrane. In Mus musculus (Mouse), this protein is Protein sel-1 homolog 3 (Sel1l3).